The sequence spans 343 residues: KRR1 small subunit processome component homolog (343 aa).

Residues 126 to 194 (DIIKIGNLVH…VRDIVLETMN (69 aa)) form the KH domain. The segment covering 230–246 (KNKNISKRKQPKNKKPK) has biased composition (basic residues). The segment at 230 to 343 (KNKNISKRKQ…LMKANKKNRS (114 aa)) is disordered. Basic and acidic residues-rich tracts occupy residues 272–303 (LNKE…RNKD) and 318–331 (RPAE…DALK). Positions 272 to 341 (LNKEQKQAKK…AKLMKANKKN (70 aa)) form a coiled coil. Residues 333-343 (KLMKANKKNRS) show a composition bias toward basic residues.

This sequence belongs to the KRR1 family. As to quaternary structure, monomer. Component of the ribosomal small subunit (SSU) processome.

Its subcellular location is the nucleus. The protein resides in the nucleolus. In terms of biological role, required for 40S ribosome biogenesis. Involved in nucleolar processing of pre-18S ribosomal RNA and ribosome assembly. Binds to RNA. Required for female germline development, cell viability during eye development and for survival of dividing cells and epithelial cells during early wing disk development. This is KRR1 small subunit processome component homolog from Drosophila virilis (Fruit fly).